The chain runs to 252 residues: Major prion protein (252 aa).

The signal sequence occupies residues 1–22 (MANLGCWMLFLFVATWSDLGLC). The tract at residues 23–38 (KKRPKPGGWNTGGSRY) is interaction with ADGRG6. The interaction with GRB2, ERI3 and SYN1 stretch occupies residues 23–229 (KKRPKPGGWN…ESQAYYQRGS (207 aa)). The segment at 26–106 (PKPGGWNTGG…QWNKPSKPKT (81 aa)) is disordered. 5 consecutive repeat copies span residues 51–58 (PQGGGWGQ), 59–66 (PHGGGWGQ), 67–74 (PHGGGWGQ), 75–82 (PHGGGWGQ), and 83–90 (PHGGGWGQ). A 5 X 8 AA tandem repeats of P-H-G-G-G-W-G-Q region spans residues 51–90 (PQGGGWGQPHGGGWGQPHGGGWGQPHGGGWGQPHGGGWGQ). The segment covering 52 to 94 (QGGGWGQPHGGGWGQPHGGGWGQPHGGGWGQPHGGGWGQGGGT) has biased composition (gly residues). Residues H60, G61, G62, H68, G69, G70, H76, G77, G78, H84, G85, and G86 each coordinate Cu(2+). Cysteines 178 and 213 form a disulfide. 2 N-linked (GlcNAc...) asparagine glycosylation sites follow: N180 and N196. A lipid anchor (GPI-anchor amidated serine) is attached at S229. A propeptide spans 230 to 252 (SMVLFSSPPVILLISFLIFLIVG) (removed in mature form).

Belongs to the prion family. As to quaternary structure, monomer and homodimer. Has a tendency to aggregate into amyloid fibrils containing a cross-beta spine, formed by a steric zipper of superposed beta-strands. Soluble oligomers may represent an intermediate stage on the path to fibril formation. Copper binding may promote oligomerization. Interacts with GRB2, APP, ERI3/PRNPIP and SYN1. Mislocalized cytosolically exposed PrP interacts with MGRN1; this interaction alters MGRN1 subcellular location and causes lysosomal enlargement. Interacts with APP. Interacts with KIAA1191. Interacts with ADGRG6.

It is found in the cell membrane. The protein resides in the golgi apparatus. Its function is as follows. Its primary physiological function is unclear. May play a role in neuronal development and synaptic plasticity. May be required for neuronal myelin sheath maintenance. May promote myelin homeostasis through acting as an agonist for ADGRG6 receptor. May play a role in iron uptake and iron homeostasis. Soluble oligomers are toxic to cultured neuroblastoma cells and induce apoptosis (in vitro). Association with GPC1 (via its heparan sulfate chains) targets PRNP to lipid rafts. Also provides Cu(2+) or Zn(2+) for the ascorbate-mediated GPC1 deaminase degradation of its heparan sulfate side chains. The chain is Major prion protein (PRNP) from Callithrix jacchus (White-tufted-ear marmoset).